The chain runs to 405 residues: L-rhamnonate dehydratase (405 aa).

Substrate contacts are provided by H33 and R59. D226, E252, and E280 together coordinate Mg(2+). Residue H329 is the Proton acceptor of the active site. E349 is a substrate binding site.

It belongs to the mandelate racemase/muconate lactonizing enzyme family. RhamD subfamily. As to quaternary structure, homooctamer; tetramer of dimers. It depends on Mg(2+) as a cofactor.

It catalyses the reaction L-rhamnonate = 2-dehydro-3-deoxy-L-rhamnonate + H2O. Catalyzes the dehydration of L-rhamnonate to 2-keto-3-deoxy-L-rhamnonate (KDR). The sequence is that of L-rhamnonate dehydratase from Escherichia coli O45:K1 (strain S88 / ExPEC).